Consider the following 411-residue polypeptide: Elongation factor Tu, apicoplast (411 aa).

Residues 10 to 214 form the tr-type G domain; sequence KPHVNIGTIG…TVDSYIEKPE (205 aa). The segment at 19–26 is G1; it reads GHVDHGKT. 19–26 is a binding site for GTP; it reads GHVDHGKT. A Mg(2+)-binding site is contributed by Thr26. The tract at residues 61-65 is G2; the sequence is GITIN. Positions 82–85 are G3; sequence DCPG. GTP-binding positions include 82-86 and 137-140; these read DCPGH and NKED. A G4 region spans residues 137 to 140; sequence NKED. The segment at 175–177 is G5; the sequence is SAL.

Belongs to the TRAFAC class translation factor GTPase superfamily. Classic translation factor GTPase family. EF-Tu/EF-1A subfamily.

It is found in the plastid. Its subcellular location is the apicoplast. The enzyme catalyses GTP + H2O = GDP + phosphate + H(+). GTP hydrolase that promotes the GTP-dependent binding of aminoacyl-tRNA to the A-site of ribosomes during protein biosynthesis. This is Elongation factor Tu, apicoplast (tufA) from Theileria parva (East coast fever infection agent).